The primary structure comprises 249 residues: Cytoplasmic envelopment protein 1 (249 aa).

It belongs to the herpesviridae cytoplasmic envelopment protein 1 family.

It is found in the virion. The protein localises to the virion tegument. It localises to the host cytoplasm. The protein resides in the host Golgi apparatus. Its function is as follows. Plays a critical role in cytoplasmic virus egress. Participates in the final step of tegumentation and envelope acquisition within the host cytoplasm. This chain is Cytoplasmic envelopment protein 1 (U75), found in Human herpesvirus 6A (strain Uganda-1102) (HHV-6 variant A).